We begin with the raw amino-acid sequence, 387 residues long: Succinate--CoA ligase [ADP-forming] subunit beta (387 aa).

An ATP-grasp domain is found at 9–244 (KQLFASYGLP…VSQEDDRENR (236 aa)). Residues K46, 53-55 (GRG), E99, C102, and E107 each bind ATP. 2 residues coordinate Mg(2+): N199 and D213. Residues N264 and 321–323 (GIV) contribute to the substrate site.

This sequence belongs to the succinate/malate CoA ligase beta subunit family. As to quaternary structure, heterotetramer of two alpha and two beta subunits. Requires Mg(2+) as cofactor.

It catalyses the reaction succinate + ATP + CoA = succinyl-CoA + ADP + phosphate. It carries out the reaction GTP + succinate + CoA = succinyl-CoA + GDP + phosphate. Its pathway is carbohydrate metabolism; tricarboxylic acid cycle; succinate from succinyl-CoA (ligase route): step 1/1. Its function is as follows. Succinyl-CoA synthetase functions in the citric acid cycle (TCA), coupling the hydrolysis of succinyl-CoA to the synthesis of either ATP or GTP and thus represents the only step of substrate-level phosphorylation in the TCA. The beta subunit provides nucleotide specificity of the enzyme and binds the substrate succinate, while the binding sites for coenzyme A and phosphate are found in the alpha subunit. This chain is Succinate--CoA ligase [ADP-forming] subunit beta, found in Legionella pneumophila (strain Corby).